Reading from the N-terminus, the 333-residue chain is Putative pectinesterase 14 (333 aa).

The signal sequence occupies residues 1-16 (MLFFILFLSIISPIES). 2 N-linked (GlcNAc...) asparagine glycosylation sites follow: asparagine 108 and asparagine 114. Threonine 116 is a binding site for substrate. Asparagine 133 carries an N-linked (GlcNAc...) asparagine glycan. Glutamine 151 provides a ligand contact to substrate. Aspartate 174 (proton donor) is an active-site residue. Aspartate 195 (nucleophile) is an active-site residue. Position 253 (arginine 253) interacts with substrate. N-linked (GlcNAc...) asparagine glycans are attached at residues asparagine 302 and asparagine 323.

The protein belongs to the pectinesterase family. Expressed in flower buds.

It is found in the secreted. The protein resides in the cell wall. It catalyses the reaction [(1-&gt;4)-alpha-D-galacturonosyl methyl ester](n) + n H2O = [(1-&gt;4)-alpha-D-galacturonosyl](n) + n methanol + n H(+). It functions in the pathway glycan metabolism; pectin degradation; 2-dehydro-3-deoxy-D-gluconate from pectin: step 1/5. Its function is as follows. Acts in the modification of cell walls via demethylesterification of cell wall pectin. This Arabidopsis thaliana (Mouse-ear cress) protein is Putative pectinesterase 14 (PME14).